The sequence spans 319 residues: tRNA pseudouridine synthase B (319 aa).

Residue Asp47 is the Nucleophile of the active site.

It belongs to the pseudouridine synthase TruB family. Type 1 subfamily.

The catalysed reaction is uridine(55) in tRNA = pseudouridine(55) in tRNA. In terms of biological role, responsible for synthesis of pseudouridine from uracil-55 in the psi GC loop of transfer RNAs. The chain is tRNA pseudouridine synthase B from Pseudoalteromonas translucida (strain TAC 125).